A 304-amino-acid polypeptide reads, in one-letter code: Secreted mono- and diacylglycerol lipase LIP1 (304 aa).

An N-terminal signal peptide occupies residues 1-19 (MLFSRFVLLAFGSVAAVSA). The O-linked (Man...) threonine glycan is linked to T32. C57 and C297 are oxidised to a cystine. The active-site Nucleophile is S171. Residue D228 is part of the active site. N253 carries an N-linked (GlcNAc...) asparagine glycan. Residue H281 is part of the active site.

Belongs to the AB hydrolase superfamily. Lipase family. Class 3 subfamily.

It localises to the secreted. It is found in the cell wall. It catalyses the reaction a monoacylglycerol + H2O = glycerol + a fatty acid + H(+). The enzyme catalyses a diacylglycerol + H2O = a monoacylglycerol + a fatty acid + H(+). Its activity is regulated as follows. RHC 80267, a well-known inhibitor of diacylglycerol lipases from mammals, also acts as an inhibitor for LIP1/SMG1. In terms of biological role, secreted lipase involved in Dandruff and seborrheic dermatitis (D/SD) probably via lipase-mediated breakdown of sebaceous lipids and release of irritating free fatty acids. Shows activity against monoglyceride and diglyceride substrates, but not triglyceride substrates and does not exhibit regio-selective production of diacylglycerols. Able to hydrolyze diacylglycerols such as distearin, dilinolein, dipalmitoylglycerol and dipalmitolein. Cleaves oleic acid from 1,2 isomers of diolein on both the 1 and the 2 position of the glycerol backbone, resulting mainly in free fatty acids but no monoolein is detected. Shows activity on monoolein and liberates mostly free fatty acids, but can also perform the reverse reaction and produce diolein. The protein is Secreted mono- and diacylglycerol lipase LIP1 of Malassezia globosa (strain ATCC MYA-4612 / CBS 7966) (Dandruff-associated fungus).